The primary structure comprises 214 residues: Urease accessory protein UreG (214 aa).

23-30 (GPVGSGKT) contributes to the GTP binding site.

It belongs to the SIMIBI class G3E GTPase family. UreG subfamily. In terms of assembly, homodimer. UreD, UreF and UreG form a complex that acts as a GTP-hydrolysis-dependent molecular chaperone, activating the urease apoprotein by helping to assemble the nickel containing metallocenter of UreC. The UreE protein probably delivers the nickel.

It localises to the cytoplasm. Its function is as follows. Facilitates the functional incorporation of the urease nickel metallocenter. This process requires GTP hydrolysis, probably effectuated by UreG. The chain is Urease accessory protein UreG from Bordetella pertussis (strain Tohama I / ATCC BAA-589 / NCTC 13251).